A 545-amino-acid polypeptide reads, in one-letter code: Sterol O-acyltransferase 1 (545 aa).

Residue methionine 1 is modified to N-acetylmethionine. Positions methionine 1 to alanine 24 are disordered. The Cytoplasmic segment spans residues methionine 1–isoleucine 133. A Phosphoserine modification is found at serine 7. The segment covering arginine 9–asparagine 18 has biased composition (polar residues). Histidine 132 is a binding site for cholesterol. Residues arginine 134–aspartate 155 traverse the membrane as a helical segment. The Lumenal portion of the chain corresponds to tyrosine 156–glutamine 175. Residues phenylalanine 176–tryptophan 201 form a helical membrane-spanning segment. Over alanine 202 to isoleucine 213 the chain is Cytoplasmic. Residues tyrosine 214–leucine 239 form a helical membrane-spanning segment. Residues alanine 240 to serine 247 lie on the Lumenal side of the membrane. The helical transmembrane segment at arginine 248–proline 271 threads the bilayer. The Cytoplasmic portion of the chain corresponds to arginine 272 to arginine 314. Residues tryptophan 315–isoleucine 347 form a helical membrane-spanning segment. At lysine 348 to serine 364 the chain is on the lumenal side. A helical transmembrane segment spans residues isoleucine 365 to methionine 390. Over leucine 391–arginine 438 the chain is Cytoplasmic. The FYXDWWN motif signature appears at phenylalanine 398–asparagine 404. 6 residues coordinate an acyl-CoA: asparagine 410, arginine 413, asparagine 416, histidine 420, tyrosine 428, and serine 451. Residues phenylalanine 439–leucine 463 form a helical membrane-spanning segment. Residue histidine 455 is part of the active site. Topologically, residues serine 464 to valine 469 are lumenal. The helical transmembrane segment at leucine 470 to valine 485 threads the bilayer. Residues asparagine 486 to arginine 491 are Cytoplasmic-facing. Residues proline 492–cysteine 523 traverse the membrane as a helical segment. Cysteine 523 and cysteine 541 are disulfide-bonded. Over proline 524–phenylalanine 545 the chain is Lumenal.

This sequence belongs to the membrane-bound acyltransferase family. Sterol o-acyltransferase subfamily. As to quaternary structure, may form homo- or heterodimers. Interacts with UBIAD1.

It is found in the endoplasmic reticulum membrane. It carries out the reaction a sterol + a long-chain fatty acyl-CoA = a long-chain 3-hydroxysterol ester + CoA. The enzyme catalyses cholesterol + an acyl-CoA = a cholesterol ester + CoA. The catalysed reaction is cholesterol + (9Z)-octadecenoyl-CoA = cholesteryl (9Z-octadecenoate) + CoA. It catalyses the reaction cholesterol + hexadecanoyl-CoA = cholesteryl hexadecanoate + CoA. It carries out the reaction octadecanoyl-CoA + cholesterol = cholesteryl octadecanoate + CoA. The enzyme catalyses (9Z,12Z)-octadecadienoyl-CoA + cholesterol = cholesteryl (9Z,12Z)-octadecadienoate + CoA. The catalysed reaction is (5Z,8Z,11Z,14Z)-eicosatetraenoyl-CoA + cholesterol = cholesteryl (5Z,8Z,11Z,14Z)-eicosatetraenoate + CoA. It catalyses the reaction (9Z)-hexadecenoyl-CoA + cholesterol = cholesteryl (9Z)-hexadecenoate + CoA. It carries out the reaction (11Z)-octadecenoyl-CoA + cholesterol = cholesteryl (11Z)-octadecenoate + CoA. The enzyme catalyses (7Z)-octadecenoyl-CoA + cholesterol = cholesteryl (7Z)-octadecenoate + CoA. Catalyzes the formation of fatty acid-cholesterol esters, which are less soluble in membranes than cholesterol. Plays a role in lipoprotein assembly and dietary cholesterol absorption. Preferentially utilizes oleoyl-CoA ((9Z)-octadecenoyl-CoA) as substrate: shows a higher activity towards an acyl-CoA substrate with a double bond at the delta-9 position (9Z) than towards saturated acyl-CoA or an unsaturated acyl-CoA with a double bond at the delta-7 (7Z) or delta-11 (11Z) positions. The sequence is that of Sterol O-acyltransferase 1 from Rattus norvegicus (Rat).